A 432-amino-acid polypeptide reads, in one-letter code: MHATNSARLFERAGNVIPGGVNSPVRAFGSVGGTPRFIREASGYTLTDVDGNNYVDLVSSWGPMILGHAHPAVVEAVREAALGGLSFGAPTEGEVALAEEIVARVAPVEKVRLVNSGTEATMSAVRLARGFTGRTKIIKFSGCYHGHVDALLADAGSGLATFGLPTSPGVTGAQAEDTIVVRYNDLDAVAAAFAANPGAIACVITEAAAGNMGAVAPLPGFNEGLRRLTREHGALLIMDEVMTGFRVSASGWYGIDNVAGDLYTFGKVMSGGLPAAAFGGRADIMGHLAPDGPVYQAGTLSGNPVAVAAGLASLRAADAEVYAKLGRNATALGDLMTQALTAEGVEHRVQYAGTLVSVFFTENTVTNYDEAKAAQTWRFPAFFHALLSRGVYPPPSAFEAWFVSAALDDRAFSIIADAMPHAAKAAAAAVKP.

K267 carries the post-translational modification N6-(pyridoxal phosphate)lysine.

The protein belongs to the class-III pyridoxal-phosphate-dependent aminotransferase family. HemL subfamily. In terms of assembly, homodimer. Pyridoxal 5'-phosphate serves as cofactor.

It is found in the cytoplasm. The enzyme catalyses (S)-4-amino-5-oxopentanoate = 5-aminolevulinate. Its pathway is porphyrin-containing compound metabolism; protoporphyrin-IX biosynthesis; 5-aminolevulinate from L-glutamyl-tRNA(Glu): step 2/2. The protein is Glutamate-1-semialdehyde 2,1-aminomutase of Rhodococcus erythropolis (strain PR4 / NBRC 100887).